The sequence spans 406 residues: S-adenosylmethionine synthase (406 aa).

His-17 is an ATP binding site. Asp-19 is a binding site for Mg(2+). Glu-45 is a binding site for K(+). The L-methionine site is built by Glu-58 and Gln-101. Positions 101–111 (QSAEINQGVAR) are flexible loop. ATP-binding positions include 178–180 (DGK), Asp-258, 264–265 (RK), Ala-281, and Lys-285. Asp-258 serves as a coordination point for L-methionine. Lys-289 serves as a coordination point for L-methionine.

It belongs to the AdoMet synthase family. Homotetramer; dimer of dimers. Mg(2+) is required as a cofactor. The cofactor is K(+).

The protein resides in the cytoplasm. The catalysed reaction is L-methionine + ATP + H2O = S-adenosyl-L-methionine + phosphate + diphosphate. It participates in amino-acid biosynthesis; S-adenosyl-L-methionine biosynthesis; S-adenosyl-L-methionine from L-methionine: step 1/1. Its function is as follows. Catalyzes the formation of S-adenosylmethionine (AdoMet) from methionine and ATP. The overall synthetic reaction is composed of two sequential steps, AdoMet formation and the subsequent tripolyphosphate hydrolysis which occurs prior to release of AdoMet from the enzyme. The protein is S-adenosylmethionine synthase of Bifidobacterium longum (strain NCC 2705).